Here is a 278-residue protein sequence, read N- to C-terminus: Probable NADP-dependent mannitol dehydrogenase (278 aa).

Residues isoleucine 45, asparagine 117, and lysine 152 each contribute to the NADP(+) site. Active-site proton donor residues include serine 171 and tyrosine 186. 3 residues coordinate NADP(+): tyrosine 186, lysine 190, and threonine 220. Lysine 190 serves as the catalytic Lowers pKa of active site Tyr.

The protein belongs to the short-chain dehydrogenases/reductases (SDR) family. Homotetramer.

The enzyme catalyses D-mannitol + NADP(+) = D-fructose + NADPH + H(+). Versatile oxidoreductase that catalyzes the oxidation and reduction of polar as well as non-polar substrates at a very broad pH range. Preferentially oxidizes secondary alcohols. Has highest activity for racemic 2-heptanol and racemic octanol. Is also an efficient reductase for selected substrates. Substrate selectivity was found for medium chain length ketones with the carbonyl function at position C-2. Has highest activities for ribulose and fructose. The enzyme is (R)-selective in the reduction direction and produces exclusively the (R)-enantiomer. The polypeptide is Probable NADP-dependent mannitol dehydrogenase (Yarrowia lipolytica (strain CLIB 122 / E 150) (Yeast)).